Reading from the N-terminus, the 299-residue chain is Taste receptor type 2 member 5 (299 aa).

A topological domain (extracellular) is located at residue M1. Residues 2–22 (LSAGLGLLMLVAVVEFLIGLI) form a helical membrane-spanning segment. Residues 23 to 45 (GNGVLVVWSFREWMRKFNWSSYN) lie on the Cytoplasmic side of the membrane. A helical membrane pass occupies residues 46-66 (LIILGLAGCRFLLQWLIILDL). Residues 67-82 (SLFPLFQSSRWLRYLS) are Extracellular-facing. Residues 83–103 (IFWVLVSQASLWFATFLSVFY) traverse the membrane as a helical segment. At 104-127 (CKKITTFDRPAYLWLKQRAYNLSL) the chain is on the cytoplasmic side. The helical transmembrane segment at 128–148 (WCLLGYFIINLLLTVQIGLMF) threads the bilayer. The Extracellular portion of the chain corresponds to 149 to 175 (YHPPQGNSSIRYPFESWQYLYAFRLNS). N-linked (GlcNAc...) asparagine glycosylation is present at N155. A helical membrane pass occupies residues 176 to 196 (GSYLPLMVFLVSSGMLIVSLY). Residues 197–223 (THHKKMKVHSAGRRDVRAKAHITALKS) are Cytoplasmic-facing. A helical membrane pass occupies residues 224 to 244 (LGCFLFLHLVYIMASPFSITS). At 245-253 (KTYPPDLTS) the chain is on the extracellular side. A helical transmembrane segment spans residues 254 to 274 (VFIWETLMAAYPSLHSLILIM). At 275 to 299 (GIPRVKQTCQKILWKTVCARRCWGP) the chain is on the cytoplasmic side.

The protein belongs to the G-protein coupled receptor T2R family.

The protein resides in the membrane. Receptor that may play a role in the perception of bitterness and is gustducin-linked. May play a role in sensing the chemical composition of the gastrointestinal content. The activity of this receptor may stimulate alpha gustducin, mediate PLC-beta-2 activation and lead to the gating of TRPM5. The chain is Taste receptor type 2 member 5 (TAS2R5) from Gorilla gorilla gorilla (Western lowland gorilla).